A 105-amino-acid polypeptide reads, in one-letter code: Translation initiation factor 1A (105 aa).

The 75-residue stretch at 18-92 (IRVKLPNKRI…DKCDIIYRYT (75 aa)) folds into the S1-like domain.

This sequence belongs to the eIF-1A family.

In terms of biological role, seems to be required for maximal rate of protein biosynthesis. Enhances ribosome dissociation into subunits and stabilizes the binding of the initiator Met-tRNA(I) to 40 S ribosomal subunits. The chain is Translation initiation factor 1A (eIF1A) from Methanocorpusculum labreanum (strain ATCC 43576 / DSM 4855 / Z).